We begin with the raw amino-acid sequence, 638 residues long: Threonine--tRNA ligase (638 aa).

Residues methionine 1–threonine 61 enclose the TGS domain. The tract at residues aspartate 244–proline 536 is catalytic. Residues cysteine 336, histidine 387, and histidine 513 each coordinate Zn(2+).

This sequence belongs to the class-II aminoacyl-tRNA synthetase family. Homodimer. Requires Zn(2+) as cofactor.

It localises to the cytoplasm. It catalyses the reaction tRNA(Thr) + L-threonine + ATP = L-threonyl-tRNA(Thr) + AMP + diphosphate + H(+). Functionally, catalyzes the attachment of threonine to tRNA(Thr) in a two-step reaction: L-threonine is first activated by ATP to form Thr-AMP and then transferred to the acceptor end of tRNA(Thr). Also edits incorrectly charged L-seryl-tRNA(Thr). The sequence is that of Threonine--tRNA ligase from Paramagnetospirillum magneticum (strain ATCC 700264 / AMB-1) (Magnetospirillum magneticum).